A 326-amino-acid chain; its full sequence is Glyoxylate/hydroxypyruvate reductase B (326 aa).

Catalysis depends on residues Arg-237 and Glu-266. His-285 serves as the catalytic Proton donor.

This sequence belongs to the D-isomer specific 2-hydroxyacid dehydrogenase family. GhrB subfamily. Homodimer.

The protein resides in the cytoplasm. The enzyme catalyses glycolate + NADP(+) = glyoxylate + NADPH + H(+). The catalysed reaction is (R)-glycerate + NAD(+) = 3-hydroxypyruvate + NADH + H(+). It carries out the reaction (R)-glycerate + NADP(+) = 3-hydroxypyruvate + NADPH + H(+). Its function is as follows. Catalyzes the NADPH-dependent reduction of glyoxylate and hydroxypyruvate into glycolate and glycerate, respectively. The polypeptide is Glyoxylate/hydroxypyruvate reductase B (Yersinia pseudotuberculosis serotype O:1b (strain IP 31758)).